Reading from the N-terminus, the 270-residue chain is Putative pyruvate, phosphate dikinase regulatory protein (270 aa).

Residue 148-155 (GISRTSKT) participates in ADP binding.

The protein belongs to the pyruvate, phosphate/water dikinase regulatory protein family. PDRP subfamily.

It carries out the reaction N(tele)-phospho-L-histidyl/L-threonyl-[pyruvate, phosphate dikinase] + ADP = N(tele)-phospho-L-histidyl/O-phospho-L-threonyl-[pyruvate, phosphate dikinase] + AMP + H(+). It catalyses the reaction N(tele)-phospho-L-histidyl/O-phospho-L-threonyl-[pyruvate, phosphate dikinase] + phosphate + H(+) = N(tele)-phospho-L-histidyl/L-threonyl-[pyruvate, phosphate dikinase] + diphosphate. Bifunctional serine/threonine kinase and phosphorylase involved in the regulation of the pyruvate, phosphate dikinase (PPDK) by catalyzing its phosphorylation/dephosphorylation. This is Putative pyruvate, phosphate dikinase regulatory protein from Bacillus cereus (strain 03BB102).